We begin with the raw amino-acid sequence, 234 residues long: Transcriptional regulatory protein WalR (234 aa).

The 114-residue stretch at 3–116 (KILIVDDEKP…ELQARVKALL (114 aa)) folds into the Response regulatory domain. Aspartate 52 is subject to 4-aspartylphosphate. The segment at residues 133–232 (PQPIQIGDLE…RRGVGYYMRN (100 aa)) is a DNA-binding region (ompR/PhoB-type).

In terms of assembly, monomer. Homodimer. Post-translationally, phosphorylated by WalK; can also be dephosphorylated by WalK.

It localises to the cytoplasm. Its function is as follows. Member of the two-component regulatory system WalK/WalR that regulates genes involved in cell wall metabolism. Binds to the promoter region of the transcription factor fabT gene in the fabTH-acp operon in vitro. Inhibits transcription of fabT, probably acting in an unphosphorylated form, thereby playing a role in the regulation of fatty acid biosynthesis. Essential for normal growth in vitro. Required for maintaining normal cellular morphology, acting, at least in part, by regulating peptidoglycan hydrolase pcsB. Involved in maintaining expression of WalRK regulon genes in exponentially growing cells. The sequence is that of Transcriptional regulatory protein WalR from Streptococcus pneumoniae serotype 2 (strain D39 / NCTC 7466).